The following is a 162-amino-acid chain: Large ribosomal subunit protein uL10 (162 aa).

The protein belongs to the universal ribosomal protein uL10 family. As to quaternary structure, part of the ribosomal stalk of the 50S ribosomal subunit. The N-terminus interacts with L11 and the large rRNA to form the base of the stalk. The C-terminus forms an elongated spine to which L12 dimers bind in a sequential fashion forming a multimeric L10(L12)X complex.

In terms of biological role, forms part of the ribosomal stalk, playing a central role in the interaction of the ribosome with GTP-bound translation factors. In Mycoplasma genitalium (strain ATCC 33530 / DSM 19775 / NCTC 10195 / G37) (Mycoplasmoides genitalium), this protein is Large ribosomal subunit protein uL10 (rplJ).